Reading from the N-terminus, the 306-residue chain is tRNA-cytidine(32) 2-sulfurtransferase (306 aa).

A disordered region spans residues 1-25 (MSAVISLPDPQPRAARDPRVAEREQ). Residues 14-25 (AARDPRVAEREQ) show a composition bias toward basic and acidic residues. The short motif at 57–62 (SGGKDS) is the PP-loop motif element. Residues C132, C135, and C223 each coordinate [4Fe-4S] cluster. A disordered region spans residues 286–306 (AHAWLAGSPADADADPETPTV). The span at 297-306 (ADADPETPTV) shows a compositional bias: acidic residues.

The protein belongs to the TtcA family. Homodimer. The cofactor is Mg(2+). [4Fe-4S] cluster serves as cofactor.

It is found in the cytoplasm. The enzyme catalyses cytidine(32) in tRNA + S-sulfanyl-L-cysteinyl-[cysteine desulfurase] + AH2 + ATP = 2-thiocytidine(32) in tRNA + L-cysteinyl-[cysteine desulfurase] + A + AMP + diphosphate + H(+). The protein operates within tRNA modification. Its function is as follows. Catalyzes the ATP-dependent 2-thiolation of cytidine in position 32 of tRNA, to form 2-thiocytidine (s(2)C32). The sulfur atoms are provided by the cysteine/cysteine desulfurase (IscS) system. This Stenotrophomonas maltophilia (strain K279a) protein is tRNA-cytidine(32) 2-sulfurtransferase.